Reading from the N-terminus, the 272-residue chain is Hydroxyethylthiazole kinase (272 aa).

A substrate-binding site is contributed by Met-62. Residues Arg-138 and Thr-183 each contribute to the ATP site. Gly-210 serves as a coordination point for substrate.

This sequence belongs to the Thz kinase family. The cofactor is Mg(2+).

The enzyme catalyses 5-(2-hydroxyethyl)-4-methylthiazole + ATP = 4-methyl-5-(2-phosphooxyethyl)-thiazole + ADP + H(+). The protein operates within cofactor biosynthesis; thiamine diphosphate biosynthesis; 4-methyl-5-(2-phosphoethyl)-thiazole from 5-(2-hydroxyethyl)-4-methylthiazole: step 1/1. In terms of biological role, catalyzes the phosphorylation of the hydroxyl group of 4-methyl-5-beta-hydroxyethylthiazole (THZ). The sequence is that of Hydroxyethylthiazole kinase from Dichelobacter nodosus (strain VCS1703A).